The sequence spans 43 residues: Structural protein ORF5a (43 aa).

The helical transmembrane segment at 2–22 (FSQIGAFLDSALLLLVAFFAV) threads the bilayer.

Belongs to the arteriviridae ORF5a protein family. Interacts with proteins GP2B and GP4.

It is found in the virion. The protein resides in the host cell membrane. Minor virion component that plays an essential role in virus infectivity. The polypeptide is Structural protein ORF5a (Sus scrofa (Pig)).